A 272-amino-acid chain; its full sequence is Shikimate dehydrogenase (NADP(+)) (272 aa).

Residues 14–16 (SKS) and threonine 61 contribute to the shikimate site. Catalysis depends on lysine 65, which acts as the Proton acceptor. Glutamate 77 serves as a coordination point for NADP(+). 2 residues coordinate shikimate: asparagine 86 and aspartate 102. NADP(+) is bound by residues 126–130 (GAGGA), 149–154 (NRTVSR), and methionine 213. Tyrosine 215 is a shikimate binding site. Glycine 237 is a binding site for NADP(+).

Belongs to the shikimate dehydrogenase family. As to quaternary structure, homodimer.

It carries out the reaction shikimate + NADP(+) = 3-dehydroshikimate + NADPH + H(+). The protein operates within metabolic intermediate biosynthesis; chorismate biosynthesis; chorismate from D-erythrose 4-phosphate and phosphoenolpyruvate: step 4/7. Involved in the biosynthesis of the chorismate, which leads to the biosynthesis of aromatic amino acids. Catalyzes the reversible NADPH linked reduction of 3-dehydroshikimate (DHSA) to yield shikimate (SA). The sequence is that of Shikimate dehydrogenase (NADP(+)) from Escherichia coli O6:K15:H31 (strain 536 / UPEC).